The following is a 380-amino-acid chain: Cytochrome b (380 aa).

4 helical membrane-spanning segments follow: residues 34–54 (FGSL…LLAM), 78–99 (WLIR…YLHI), 114–134 (WNTG…GYVL), and 179–199 (FFAL…IHLT). Positions 84 and 98 each coordinate heme b. Heme b contacts are provided by H183 and H197. A ubiquinone is bound at residue H202. The next 4 membrane-spanning stretches (helical) occupy residues 227 to 247 (TKDT…ALFS), 289 to 309 (LGGV…PLLH), 321 to 341 (LSQL…WIGS), and 348 to 368 (FIII…ILFP).

This sequence belongs to the cytochrome b family. As to quaternary structure, the cytochrome bc1 complex contains 11 subunits: 3 respiratory subunits (MT-CYB, CYC1 and UQCRFS1), 2 core proteins (UQCRC1 and UQCRC2) and 6 low-molecular weight proteins (UQCRH/QCR6, UQCRB/QCR7, UQCRQ/QCR8, UQCR10/QCR9, UQCR11/QCR10 and a cleavage product of UQCRFS1). This cytochrome bc1 complex then forms a dimer. Requires heme b as cofactor.

The protein localises to the mitochondrion inner membrane. Functionally, component of the ubiquinol-cytochrome c reductase complex (complex III or cytochrome b-c1 complex) that is part of the mitochondrial respiratory chain. The b-c1 complex mediates electron transfer from ubiquinol to cytochrome c. Contributes to the generation of a proton gradient across the mitochondrial membrane that is then used for ATP synthesis. In Aptenodytes patagonicus (King penguin), this protein is Cytochrome b (MT-CYB).